We begin with the raw amino-acid sequence, 147 residues long: Histone H2B (147 aa).

Basic and acidic residues predominate over residues 1–31 (MAPKAEKKPAEKKPAEEKKAVAEKAPAEKKP). The disordered stretch occupies residues 1-55 (MAPKAEKKPAEKKPAEEKKAVAEKAPAEKKPKAGKKLPKEGGAAAGDKKKKRVKK). N6-acetyllysine is present on residues Lys-7, Lys-35, and Lys-36. Lys-143 is covalently cross-linked (Glycyl lysine isopeptide (Lys-Gly) (interchain with G-Cter in ubiquitin)).

Belongs to the histone H2B family. In terms of assembly, the nucleosome is a histone octamer containing two molecules each of H2A, H2B, H3 and H4 assembled in one H3-H4 heterotetramer and two H2A-H2B heterodimers. The octamer wraps approximately 147 bp of DNA. Post-translationally, can be acetylated to form H2BK6ac, H2BK33ac and H2BK34ac. In terms of processing, monoubiquitinated to form H2BK143ub1; may give a specific tag for epigenetic transcriptional activation.

It is found in the nucleus. The protein localises to the chromosome. In terms of biological role, core component of nucleosome. Nucleosomes wrap and compact DNA into chromatin, limiting DNA accessibility to the cellular machineries which require DNA as a template. Histones thereby play a central role in transcription regulation, DNA repair, DNA replication and chromosomal stability. DNA accessibility is regulated via a complex set of post-translational modifications of histones, also called histone code, and nucleosome remodeling. The sequence is that of Histone H2B (HIS2B) from Gossypium hirsutum (Upland cotton).